The following is a 423-amino-acid chain: Pseudouridylate synthase 1 homolog (423 aa).

The segment at 32 to 75 (AGNKVPPALASHQPDRKGRGGWVWEETEHPAKRVKGGEDEEPPR) is disordered. A compositionally biased stretch (basic and acidic residues) spans 57-68 (ETEHPAKRVKGG). Asp142 acts as the Nucleophile in catalysis. The disordered stretch occupies residues 403–423 (ADTGAKVPSSLEGSEGDGDTD). Ser411 and Ser416 each carry phosphoserine. Thr422 is modified (phosphothreonine).

Belongs to the tRNA pseudouridine synthase TruA family. As to quaternary structure, monomer. Forms a complex with RARG and the SRA1 RNA in the nucleus.

It localises to the nucleus. The protein localises to the cytoplasm. The protein resides in the mitochondrion. The catalysed reaction is a uridine in tRNA = a pseudouridine in tRNA. It catalyses the reaction uridine(38/39/40) in tRNA = pseudouridine(38/39/40) in tRNA. It carries out the reaction a uridine in mRNA = a pseudouridine in mRNA. Its function is as follows. Pseudouridylate synthase that catalyzes pseudouridylation of tRNAs and mRNAs. Acts on positions 27/28 in the anticodon stem and also positions 34 and 36 in the anticodon of an intron containing tRNA. Also catalyzes pseudouridylation of mRNAs: mediates pseudouridylation of mRNAs with the consensus sequence 5'-UGUAG-3'. Acts as a regulator of pre-mRNA splicing by mediating pseudouridylation of pre-mRNAs at locations associated with alternatively spliced regions. Pseudouridylation of pre-mRNAs near splice sites directly regulates mRNA splicing and mRNA 3'-end processing. Involved in regulation of nuclear receptor activity through pseudouridylation of SRA1 mRNA. Functionally, does not form pseudouridine when expressed in vitro. The sequence is that of Pseudouridylate synthase 1 homolog from Mus musculus (Mouse).